Consider the following 482-residue polypeptide: tRNA sulfurtransferase (482 aa).

The region spanning 61 to 165 (AQYLETLACI…NDELYIISAV (105 aa)) is the THUMP domain. ATP is bound by residues 183 to 184 (LL), lysine 265, glycine 287, and glutamine 296. Cysteine 344 and cysteine 456 are oxidised to a cystine. The Rhodanese domain maps to 404–482 (LAADEVILDI…GFDNVKVYRP (79 aa)). Cysteine 456 functions as the Cysteine persulfide intermediate in the catalytic mechanism.

Belongs to the ThiI family.

The protein localises to the cytoplasm. The catalysed reaction is [ThiI sulfur-carrier protein]-S-sulfanyl-L-cysteine + a uridine in tRNA + 2 reduced [2Fe-2S]-[ferredoxin] + ATP + H(+) = [ThiI sulfur-carrier protein]-L-cysteine + a 4-thiouridine in tRNA + 2 oxidized [2Fe-2S]-[ferredoxin] + AMP + diphosphate. It catalyses the reaction [ThiS sulfur-carrier protein]-C-terminal Gly-Gly-AMP + S-sulfanyl-L-cysteinyl-[cysteine desulfurase] + AH2 = [ThiS sulfur-carrier protein]-C-terminal-Gly-aminoethanethioate + L-cysteinyl-[cysteine desulfurase] + A + AMP + 2 H(+). The protein operates within cofactor biosynthesis; thiamine diphosphate biosynthesis. Catalyzes the ATP-dependent transfer of a sulfur to tRNA to produce 4-thiouridine in position 8 of tRNAs, which functions as a near-UV photosensor. Also catalyzes the transfer of sulfur to the sulfur carrier protein ThiS, forming ThiS-thiocarboxylate. This is a step in the synthesis of thiazole, in the thiamine biosynthesis pathway. The sulfur is donated as persulfide by IscS. The polypeptide is tRNA sulfurtransferase (Aeromonas salmonicida (strain A449)).